Reading from the N-terminus, the 236-residue chain is 5'-methylthioadenosine/S-adenosylhomocysteine nucleosidase (236 aa).

E12 acts as the Proton acceptor in catalysis. Residues G78, I153, and 174–175 (ME) each bind substrate. The active-site Proton donor is D198.

It belongs to the PNP/UDP phosphorylase family. MtnN subfamily.

It catalyses the reaction S-adenosyl-L-homocysteine + H2O = S-(5-deoxy-D-ribos-5-yl)-L-homocysteine + adenine. It carries out the reaction S-methyl-5'-thioadenosine + H2O = 5-(methylsulfanyl)-D-ribose + adenine. The enzyme catalyses 5'-deoxyadenosine + H2O = 5-deoxy-D-ribose + adenine. It functions in the pathway amino-acid biosynthesis; L-methionine biosynthesis via salvage pathway; S-methyl-5-thio-alpha-D-ribose 1-phosphate from S-methyl-5'-thioadenosine (hydrolase route): step 1/2. In terms of biological role, catalyzes the irreversible cleavage of the glycosidic bond in both 5'-methylthioadenosine (MTA) and S-adenosylhomocysteine (SAH/AdoHcy) to adenine and the corresponding thioribose, 5'-methylthioribose and S-ribosylhomocysteine, respectively. Also cleaves 5'-deoxyadenosine, a toxic by-product of radical S-adenosylmethionine (SAM) enzymes, into 5-deoxyribose and adenine. In Shewanella baltica (strain OS155 / ATCC BAA-1091), this protein is 5'-methylthioadenosine/S-adenosylhomocysteine nucleosidase.